A 346-amino-acid chain; its full sequence is Peripherin-2 (346 aa).

Topologically, residues 1-24 (MALLKVKFDQKKRVKLAQGLWLMN) are cytoplasmic. The helical transmembrane segment at 25–43 (WLSVLAGIVLFSLGLFLKI) threads the bilayer. The Lumenal portion of the chain corresponds to 44–61 (ELRKRSDVMDNSESHFVP). A helical membrane pass occupies residues 62-80 (NSLIGVGVLSCVFNSLAGK). At 81–99 (ICYDALDPAKYAKWKPWLK) the chain is on the cytoplasmic side. Residues 100-123 (LYLAVCVFFNVILFLVALCCFLLR) traverse the membrane as a helical segment. The Lumenal segment spans residues 124 to 264 (GSLESTLAYG…LNYYSSLMNS (141 aa)). Asn-229 is a glycosylation site (N-linked (GlcNAc...) asparagine). Residues 265 to 290 (MGVVTLLIWLFEVSITAGLRFLHTAL) form a helical membrane-spanning segment. The Cytoplasmic segment spans residues 291–346 (ESVSNPEDPECESEGWLLENSVSETWKAFLESFKKLGKSNQVEAEAADAGQAPEAG). The tract at residues 341-346 (QAPEAG) is interaction with MREG.

Belongs to the PRPH2/ROM1 family. Homodimer; disulfide-linked. Forms a homotetramer. Forms a heterotetramer with ROM1. Homotetramer and heterotetramer core complexes go on to form higher order complexes by formation of intermolecular disulfide bonds. Interacts with MREG. Interacts with STX3. Interacts with SNAP25. As to expression, retina (photoreceptor). In rim region of ROS (rod outer segment) disks.

It is found in the membrane. The protein resides in the cell projection. Its subcellular location is the cilium. It localises to the photoreceptor outer segment. The protein localises to the photoreceptor inner segment. Essential for retina photoreceptor outer segment disk morphogenesis, may also play a role with ROM1 in the maintenance of outer segment disk structure. Required for the maintenance of retinal outer nuclear layer thickness. Required for the correct development and organization of the photoreceptor inner segment. The sequence is that of Peripherin-2 (Prph2) from Rattus norvegicus (Rat).